A 74-amino-acid chain; its full sequence is Translation initiation factor IF-1 (74 aa).

Residues 1-72 (MSKEDAIEME…NKGRITYRLK (72 aa)) form the S1-like domain.

This sequence belongs to the IF-1 family. As to quaternary structure, component of the 30S ribosomal translation pre-initiation complex which assembles on the 30S ribosome in the order IF-2 and IF-3, IF-1 and N-formylmethionyl-tRNA(fMet); mRNA recruitment can occur at any time during PIC assembly.

The protein localises to the cytoplasm. One of the essential components for the initiation of protein synthesis. Stabilizes the binding of IF-2 and IF-3 on the 30S subunit to which N-formylmethionyl-tRNA(fMet) subsequently binds. Helps modulate mRNA selection, yielding the 30S pre-initiation complex (PIC). Upon addition of the 50S ribosomal subunit IF-1, IF-2 and IF-3 are released leaving the mature 70S translation initiation complex. In Synechococcus sp. (strain JA-2-3B'a(2-13)) (Cyanobacteria bacterium Yellowstone B-Prime), this protein is Translation initiation factor IF-1.